The chain runs to 365 residues: UDP-N-acetylglucosamine--N-acetylmuramyl-(pentapeptide) pyrophosphoryl-undecaprenol N-acetylglucosamine transferase (365 aa).

UDP-N-acetyl-alpha-D-glucosamine contacts are provided by residues 13 to 15, asparagine 125, arginine 165, serine 192, and glutamine 293; that span reads TGG.

Belongs to the glycosyltransferase 28 family. MurG subfamily.

The protein resides in the cell inner membrane. The enzyme catalyses di-trans,octa-cis-undecaprenyl diphospho-N-acetyl-alpha-D-muramoyl-L-alanyl-D-glutamyl-meso-2,6-diaminopimeloyl-D-alanyl-D-alanine + UDP-N-acetyl-alpha-D-glucosamine = di-trans,octa-cis-undecaprenyl diphospho-[N-acetyl-alpha-D-glucosaminyl-(1-&gt;4)]-N-acetyl-alpha-D-muramoyl-L-alanyl-D-glutamyl-meso-2,6-diaminopimeloyl-D-alanyl-D-alanine + UDP + H(+). Its pathway is cell wall biogenesis; peptidoglycan biosynthesis. Cell wall formation. Catalyzes the transfer of a GlcNAc subunit on undecaprenyl-pyrophosphoryl-MurNAc-pentapeptide (lipid intermediate I) to form undecaprenyl-pyrophosphoryl-MurNAc-(pentapeptide)GlcNAc (lipid intermediate II). In Ruegeria pomeroyi (strain ATCC 700808 / DSM 15171 / DSS-3) (Silicibacter pomeroyi), this protein is UDP-N-acetylglucosamine--N-acetylmuramyl-(pentapeptide) pyrophosphoryl-undecaprenol N-acetylglucosamine transferase.